The sequence spans 401 residues: Acetate kinase (401 aa).

Residue Asn-7 coordinates Mg(2+). Lys-14 contacts ATP. Substrate is bound at residue Arg-96. The active-site Proton donor/acceptor is Asp-153. ATP is bound by residues 212 to 216 (HLGNG), 287 to 289 (DMR), and 335 to 339 (GIGEN). Glu-388 lines the Mg(2+) pocket.

Belongs to the acetokinase family. Homodimer. It depends on Mg(2+) as a cofactor. The cofactor is Mn(2+).

Its subcellular location is the cytoplasm. It carries out the reaction acetate + ATP = acetyl phosphate + ADP. It functions in the pathway metabolic intermediate biosynthesis; acetyl-CoA biosynthesis; acetyl-CoA from acetate: step 1/2. Functionally, catalyzes the formation of acetyl phosphate from acetate and ATP. Can also catalyze the reverse reaction. The protein is Acetate kinase of Microcystis aeruginosa (strain NIES-843 / IAM M-2473).